The chain runs to 60 residues: uncharacterized protein (60 aa).

Residues Leu19 to Tyr39 traverse the membrane as a helical segment.

The protein resides in the membrane. This is an uncharacterized protein from Saccharomyces cerevisiae (strain ATCC 204508 / S288c) (Baker's yeast).